A 285-amino-acid chain; its full sequence is Protein FD (285 aa).

A compositionally biased stretch (basic residues) spans 1–12 (MLSSAKHQRNHR). Disordered regions lie at residues 1–59 (MLSS…QKRS), 79–107 (NRHS…NSIF), 115–134 (LNQE…NGDS), 198–236 (SSSF…ARKQ), and 257–285 (KRQQ…TAPF). Polar residues predominate over residues 13 to 25 (LSATNKNQTLTKV). Residues 26–50 (SSISSSSPSSSSSSSSTSSSSPLPS) show a composition bias toward low complexity. Residues 98 to 107 (HHNQNPNSIF) are compositionally biased toward polar residues. In terms of domain architecture, bZIP spans 214–277 (GNRRHKRMIK…AIQQPKKNTL (64 aa)). The basic motif stretch occupies residues 216 to 235 (RRHKRMIKNRESAARSRARK). The tract at residues 242-263 (LELEVAHLQAENARLKRQQDQL) is leucine-zipper. The span at 272 to 285 (PKKNTLQRSSTAPF) shows a compositional bias: polar residues. Residue threonine 282 is modified to Phosphothreonine.

This sequence belongs to the bZIP family. Self-interacts. Interacts with FT and FDP/BZIP27. Interacts with GRF3 and GRF4, and in a calcium-independent manner, with CPK6 and CPK33. In terms of processing, phosphorylated at Thr-282 in a calcium-dependent manner by CPK6 and CPK33. In terms of tissue distribution, highly expressed in shoot apex.

Its subcellular location is the nucleus. Functionally, transcription factor required for the transition to flowering promoted by FT. The chain is Protein FD from Arabidopsis thaliana (Mouse-ear cress).